Here is a 550-residue protein sequence, read N- to C-terminus: CTP synthase (550 aa).

An amidoligase domain region spans residues 1-267; the sequence is MKTKFIFITG…DQKIAIMLRL (267 aa). Ser-14 provides a ligand contact to CTP. UTP is bound at residue Ser-14. ATP-binding positions include 15 to 20 and Asp-72; that span reads SLGKGL. Mg(2+)-binding residues include Asp-72 and Glu-141. Residues 148–150, 188–193, and Lys-224 each bind CTP; these read DIE and KTKPTQ. Residues 188–193 and Lys-224 contribute to the UTP site; that span reads KTKPTQ. In terms of domain architecture, Glutamine amidotransferase type-1 spans 292 to 545; sequence TIGIVGKYVD…IKAAKKEAMG (254 aa). Residue Gly-354 coordinates L-glutamine. The active-site Nucleophile; for glutamine hydrolysis is the Cys-381. L-glutamine is bound by residues 382-385, Glu-405, and Arg-473; that span reads LGMQ. Residues His-518 and Glu-520 contribute to the active site.

This sequence belongs to the CTP synthase family. In terms of assembly, homotetramer.

It carries out the reaction UTP + L-glutamine + ATP + H2O = CTP + L-glutamate + ADP + phosphate + 2 H(+). The enzyme catalyses L-glutamine + H2O = L-glutamate + NH4(+). It catalyses the reaction UTP + NH4(+) + ATP = CTP + ADP + phosphate + 2 H(+). Its pathway is pyrimidine metabolism; CTP biosynthesis via de novo pathway; CTP from UDP: step 2/2. Allosterically activated by GTP, when glutamine is the substrate; GTP has no effect on the reaction when ammonia is the substrate. The allosteric effector GTP functions by stabilizing the protein conformation that binds the tetrahedral intermediate(s) formed during glutamine hydrolysis. Inhibited by the product CTP, via allosteric rather than competitive inhibition. Functionally, catalyzes the ATP-dependent amination of UTP to CTP with either L-glutamine or ammonia as the source of nitrogen. Regulates intracellular CTP levels through interactions with the four ribonucleotide triphosphates. The sequence is that of CTP synthase from Nitratidesulfovibrio vulgaris (strain DSM 19637 / Miyazaki F) (Desulfovibrio vulgaris).